A 212-amino-acid chain; its full sequence is Adenylate kinase (212 aa).

Residue 10-15 (GAGKGT) participates in ATP binding. The NMP stretch occupies residues 30–59 (STGDMFRAAMANQTEMGVLAKSYIDKGELV). Residues Thr31, Arg36, 57 to 59 (ELV), 86 to 89 (GYPR), and Gln93 each bind AMP. The segment at 127-159 (GRIIHRVTGETFHKVFNPPVDYKEEDYYQREDD) is LID. ATP contacts are provided by residues Arg128 and 137–138 (TF). Residues Arg156 and Arg167 each coordinate AMP. ATP is bound at residue Gln195.

It belongs to the adenylate kinase family. As to quaternary structure, monomer.

The protein resides in the cytoplasm. It carries out the reaction AMP + ATP = 2 ADP. Its pathway is purine metabolism; AMP biosynthesis via salvage pathway; AMP from ADP: step 1/1. In terms of biological role, catalyzes the reversible transfer of the terminal phosphate group between ATP and AMP. Plays an important role in cellular energy homeostasis and in adenine nucleotide metabolism. This Streptococcus pneumoniae (strain JJA) protein is Adenylate kinase.